Here is a 1024-residue protein sequence, read N- to C-terminus: Beta-galactosidase (1024 aa).

2 residues coordinate substrate: asparagine 103 and aspartate 202. Residue aspartate 202 participates in Na(+) binding. 3 residues coordinate Mg(2+): glutamate 417, histidine 419, and glutamate 462. Substrate is bound by residues glutamate 462 and 538–541 (EYAH). Glutamate 462 acts as the Proton donor in catalysis. Catalysis depends on glutamate 538, which acts as the Nucleophile. A Mg(2+)-binding site is contributed by asparagine 598. Na(+) is bound by residues phenylalanine 602 and asparagine 605. Residues asparagine 605 and tryptophan 1000 each coordinate substrate.

Belongs to the glycosyl hydrolase 2 family. As to quaternary structure, homotetramer. It depends on Mg(2+) as a cofactor. Requires Na(+) as cofactor.

It carries out the reaction Hydrolysis of terminal non-reducing beta-D-galactose residues in beta-D-galactosides.. The polypeptide is Beta-galactosidase (Escherichia coli O139:H28 (strain E24377A / ETEC)).